A 685-amino-acid chain; its full sequence is Translation initiation factor IF-2 (685 aa).

The disordered stretch occupies residues Ile-60–Pro-79. Over residues Lys-64–Pro-79 the composition is skewed to basic and acidic residues. Positions Asn-175–Val-352 constitute a tr-type G domain. Residues Gly-184–Thr-191 form a G1 region. Gly-184 to Thr-191 contributes to the GTP binding site. A G2 region spans residues Gly-209–Ser-213. The G3 stretch occupies residues Asp-230 to Gly-233. GTP is bound by residues Asp-230–His-234 and Asn-284–Asp-287. A G4 region spans residues Asn-284–Asp-287. Residues Ser-321–Arg-323 are G5.

This sequence belongs to the TRAFAC class translation factor GTPase superfamily. Classic translation factor GTPase family. IF-2 subfamily.

It localises to the cytoplasm. In terms of biological role, one of the essential components for the initiation of protein synthesis. Protects formylmethionyl-tRNA from spontaneous hydrolysis and promotes its binding to the 30S ribosomal subunits. Also involved in the hydrolysis of GTP during the formation of the 70S ribosomal complex. The protein is Translation initiation factor IF-2 of Fervidobacterium nodosum (strain ATCC 35602 / DSM 5306 / Rt17-B1).